The following is a 220-amino-acid chain: Protein-L-isoaspartate O-methyltransferase (220 aa).

The active site involves Ser65.

It belongs to the methyltransferase superfamily. L-isoaspartyl/D-aspartyl protein methyltransferase family.

The protein localises to the cytoplasm. It carries out the reaction [protein]-L-isoaspartate + S-adenosyl-L-methionine = [protein]-L-isoaspartate alpha-methyl ester + S-adenosyl-L-homocysteine. In terms of biological role, catalyzes the methyl esterification of L-isoaspartyl residues in peptides and proteins that result from spontaneous decomposition of normal L-aspartyl and L-asparaginyl residues. It plays a role in the repair and/or degradation of damaged proteins. The protein is Protein-L-isoaspartate O-methyltransferase of Pelodictyon phaeoclathratiforme (strain DSM 5477 / BU-1).